The following is a 218-amino-acid chain: Uracil-DNA glycosylase (218 aa).

The active-site Proton acceptor is the Asp59.

The protein belongs to the uracil-DNA glycosylase (UDG) superfamily. UNG family.

The protein resides in the cytoplasm. It carries out the reaction Hydrolyzes single-stranded DNA or mismatched double-stranded DNA and polynucleotides, releasing free uracil.. Functionally, excises uracil residues from the DNA which can arise as a result of misincorporation of dUMP residues by DNA polymerase or due to deamination of cytosine. This chain is Uracil-DNA glycosylase, found in Staphylococcus aureus (strain MSSA476).